We begin with the raw amino-acid sequence, 443 residues long: Glucose-6-phosphate isomerase (443 aa).

E285 (proton donor) is an active-site residue. Residues H306 and K420 contribute to the active site.

The protein belongs to the GPI family.

The protein localises to the cytoplasm. It catalyses the reaction alpha-D-glucose 6-phosphate = beta-D-fructose 6-phosphate. It participates in carbohydrate biosynthesis; gluconeogenesis. It functions in the pathway carbohydrate degradation; glycolysis; D-glyceraldehyde 3-phosphate and glycerone phosphate from D-glucose: step 2/4. In terms of biological role, catalyzes the reversible isomerization of glucose-6-phosphate to fructose-6-phosphate. This is Glucose-6-phosphate isomerase from Staphylococcus aureus (strain Mu3 / ATCC 700698).